The primary structure comprises 163 residues: MAKESSFDIVSKVELPEVQNAIQTALKEIGTRYDFKGSKSSITLEGDELVLVSDDEFKMNQLKDVLVGKLIKRNVPTKNIEYSKLENASGGTVRQRGKLVQGIDKENAKKINNLIKKSGLKVKSQVQDDQVRVTGKNKDDLQQIIAMVREADLPIDVQFINFR.

It belongs to the YajQ family.

Its function is as follows. Nucleotide-binding protein. This is Nucleotide-binding protein BLi01194 from Bacillus licheniformis (strain ATCC 14580 / DSM 13 / JCM 2505 / CCUG 7422 / NBRC 12200 / NCIMB 9375 / NCTC 10341 / NRRL NRS-1264 / Gibson 46).